A 434-amino-acid polypeptide reads, in one-letter code: D-amino acid dehydrogenase (434 aa).

3 to 17 (VVILGSGVVGVTSAW) is a binding site for FAD.

This sequence belongs to the DadA oxidoreductase family. FAD is required as a cofactor.

It carries out the reaction a D-alpha-amino acid + A + H2O = a 2-oxocarboxylate + AH2 + NH4(+). It participates in amino-acid degradation; D-alanine degradation; NH(3) and pyruvate from D-alanine: step 1/1. Its function is as follows. Oxidative deamination of D-amino acids. This is D-amino acid dehydrogenase from Yersinia pseudotuberculosis serotype O:3 (strain YPIII).